We begin with the raw amino-acid sequence, 93 residues long: Co-chaperonin GroES (93 aa).

It belongs to the GroES chaperonin family. Heptamer of 7 subunits arranged in a ring. Interacts with the chaperonin GroEL.

The protein localises to the cytoplasm. Functionally, together with the chaperonin GroEL, plays an essential role in assisting protein folding. The GroEL-GroES system forms a nano-cage that allows encapsulation of the non-native substrate proteins and provides a physical environment optimized to promote and accelerate protein folding. GroES binds to the apical surface of the GroEL ring, thereby capping the opening of the GroEL channel. The protein is Co-chaperonin GroES of Streptococcus constellatus.